The chain runs to 518 residues: Adenine deaminase (518 aa).

The protein belongs to the metallo-dependent hydrolases superfamily. Adenine deaminase family. It depends on Mn(2+) as a cofactor.

It carries out the reaction adenine + H2O + H(+) = hypoxanthine + NH4(+). This chain is Adenine deaminase, found in Methanoculleus marisnigri (strain ATCC 35101 / DSM 1498 / JR1).